Reading from the N-terminus, the 95-residue chain is Aspartyl/glutamyl-tRNA(Asn/Gln) amidotransferase subunit C (95 aa).

Belongs to the GatC family. Heterotrimer of A, B and C subunits.

It catalyses the reaction L-glutamyl-tRNA(Gln) + L-glutamine + ATP + H2O = L-glutaminyl-tRNA(Gln) + L-glutamate + ADP + phosphate + H(+). The catalysed reaction is L-aspartyl-tRNA(Asn) + L-glutamine + ATP + H2O = L-asparaginyl-tRNA(Asn) + L-glutamate + ADP + phosphate + 2 H(+). Functionally, allows the formation of correctly charged Asn-tRNA(Asn) or Gln-tRNA(Gln) through the transamidation of misacylated Asp-tRNA(Asn) or Glu-tRNA(Gln) in organisms which lack either or both of asparaginyl-tRNA or glutaminyl-tRNA synthetases. The reaction takes place in the presence of glutamine and ATP through an activated phospho-Asp-tRNA(Asn) or phospho-Glu-tRNA(Gln). This chain is Aspartyl/glutamyl-tRNA(Asn/Gln) amidotransferase subunit C, found in Anaeromyxobacter sp. (strain Fw109-5).